Here is a 953-residue protein sequence, read N- to C-terminus: Atromentin synthetase invA2 (953 aa).

Residues 38–460 (RAVSQYPNHE…SGRIKDTVIV (423 aa)) are adenylation (A) domain. The Carrier domain occupies 592-670 (APSTETEKTL…SLAKYVDSLI (79 aa)). Residues 597-667 (TEKTLAGIYA…VISSLAKYVD (71 aa)) are thiolation and peptide carrier (T) domain. Serine 629 is subject to O-(pantetheine 4'-phosphoryl)serine. Residues 693–795 (PIFMVHPGVG…FTGLINIPPH (103 aa)) are thioesterase (TE) domain.

It belongs to the ATP-dependent AMP-binding enzyme family.

It functions in the pathway secondary metabolite biosynthesis. In terms of biological role, an L-tyrosine:2-oxoglutarate aminotransferase (probably invD) and atromentin synthetase invA2 catalyze consecutive steps to turn over L-tyrosine into atromentin, which represents the generic precursor molecule for the entire terphenylquinone and pulvinic acid family of pigments, which are widely distributed secondary metabolites in homobasidiomycetes. The first step catalyzed by the aminotransferase converts L-tyrosine in to 4-hydroxyphenylpyruvate (4-HPP). Adenylation of two 4-HPP monomers by the invA2 adenylation (A) domain, covalent tethering of the monomers as a thioester and oxoester onto the invA2 thiolation (T) and thioesterase (TE) domains, respectively, and symmetric C-C-bond formation between two monomers catalyzed by the invA2 TE domain leads to atromentin. This is Atromentin synthetase invA2 (invA2) from Paxillus involutus (Naked brimcap).